A 434-amino-acid polypeptide reads, in one-letter code: Chaperone SurA (434 aa).

The N-terminal stretch at 1–29 (MKTLRLNFRSAILKALGALLLLQGCLAHA) is a signal peptide. 2 PpiC domains span residues 180–281 (AEEY…AMLE) and 290–389 (VEQS…QVQD).

Its subcellular location is the periplasm. It carries out the reaction [protein]-peptidylproline (omega=180) = [protein]-peptidylproline (omega=0). In terms of biological role, chaperone involved in the correct folding and assembly of outer membrane proteins. Recognizes specific patterns of aromatic residues and the orientation of their side chains, which are found more frequently in integral outer membrane proteins. May act in both early periplasmic and late outer membrane-associated steps of protein maturation. This is Chaperone SurA from Hahella chejuensis (strain KCTC 2396).